The sequence spans 147 residues: MADFDAVLKFWGPVEADYDKIGNMVLTRLFTEHPDTQKLFPKFAGIGLGDMAGNAAISAHGATVLKKLAEVLKAKGNHAGIIKPLANSHATKHKIAINNFKLITEIIVKVMQEKAGLDAGGQTALRNVMGVFIADMDANYKELGFSG.

Residues 2–141 form the Globin domain; that stretch reads ADFDAVLKFW…FIADMDANYK (140 aa). His60 contacts nitrite. O2 is bound at residue His60. Position 89 (His89) interacts with heme b.

This sequence belongs to the globin family. Monomeric.

It is found in the cytoplasm. It localises to the sarcoplasm. It carries out the reaction Fe(III)-heme b-[protein] + nitric oxide + H2O = Fe(II)-heme b-[protein] + nitrite + 2 H(+). It catalyses the reaction H2O2 + AH2 = A + 2 H2O. Monomeric heme protein which primary function is to store oxygen and facilitate its diffusion within muscle tissues. Reversibly binds oxygen through a pentacoordinated heme iron and enables its timely and efficient release as needed during periods of heightened demand. Depending on the oxidative conditions of tissues and cells, and in addition to its ability to bind oxygen, it also has a nitrite reductase activity whereby it regulates the production of bioactive nitric oxide. Under stress conditions, like hypoxia and anoxia, it also protects cells against reactive oxygen species thanks to its pseudoperoxidase activity. The chain is Myoglobin (mb) from Scomber japonicus (Chub mackerel).